A 180-amino-acid chain; its full sequence is MENRLKAQYEKEIVPALVDKFNYTSVMQVPKLAKIVLNMGVGDAVTNAKNLDEAVEELTLISGQKPLVTRAKKSIAGFRLREGMAIGAKVDLRGERMYDFLDKLINVSLPRVRDFHGVSTRSFDGRGNYTLGVREQLIFPEINYDNVNRVRGLDIVIVTTADSDEESRELLTQFGMPFAK.

This sequence belongs to the universal ribosomal protein uL5 family. Part of the 50S ribosomal subunit; part of the 5S rRNA/L5/L18/L25 subcomplex. Contacts the 5S rRNA and the P site tRNA. Forms a bridge to the 30S subunit in the 70S ribosome.

This is one of the proteins that bind and probably mediate the attachment of the 5S RNA into the large ribosomal subunit, where it forms part of the central protuberance. In the 70S ribosome it contacts protein S13 of the 30S subunit (bridge B1b), connecting the 2 subunits; this bridge is implicated in subunit movement. Contacts the P site tRNA; the 5S rRNA and some of its associated proteins might help stabilize positioning of ribosome-bound tRNAs. This chain is Large ribosomal subunit protein uL5, found in Lactiplantibacillus plantarum (strain ATCC BAA-793 / NCIMB 8826 / WCFS1) (Lactobacillus plantarum).